The primary structure comprises 278 residues: Cysteine-rich repeat secretory protein 18 (278 aa).

The signal sequence occupies residues 1-32 (MYSSSSVSKRFVLVPIVVVVTTQLLLVRNVSS). Gnk2-homologous domains follow at residues 39-147 (YLHH…SLDT) and 160-267 (PSAK…LYPF).

This sequence belongs to the cysteine-rich repeat secretory protein family.

It localises to the secreted. This is Cysteine-rich repeat secretory protein 18 (CRRSP18) from Arabidopsis thaliana (Mouse-ear cress).